The following is a 409-amino-acid chain: Arginine deiminase (409 aa).

Cysteine 399 (amidino-cysteine intermediate) is an active-site residue.

The protein belongs to the arginine deiminase family.

It is found in the cytoplasm. The catalysed reaction is L-arginine + H2O = L-citrulline + NH4(+). It functions in the pathway amino-acid degradation; L-arginine degradation via ADI pathway; carbamoyl phosphate from L-arginine: step 1/2. This Latilactobacillus sakei (Lactobacillus sakei) protein is Arginine deiminase (arcA).